Reading from the N-terminus, the 910-residue chain is MSRFFANGSESESESSEEEIQATNFNKASAFQFSDDEEEVKRVVRSTKEKRYENLTSIIKTIRNHKKIKDIPNTLSSFEDLTRAYQKALPVISKEENGITPRFYIRCLAELEDFINEVWEDREGRKNLSKNNSKSLGTLRQKVRKYIKDFEDDLSRFREAPDQESEAEDEVVALESDGGDAGDDSDAGVKPTEAAPKAVKSAPAKAAPADDDDSDDSIDWDSDSESETESSDDENQYQNMRERFLKRTTEKEEKDDDKRKDKRKEQKTKIRKRAEDDEDGEWETVVKGHVVEKPKMFEKDAEIDVPLVLAKLLEIMSARGKKRTDRRLQIDLLFELRDISDQHNLGTAVSVKIHFNIISAIYDYNQKISEPMKLEHWALLLEVMQSMMKLLLANADIIMSESVAEEHEEYATSPFYVRGCPLAAVERLDDEFVKLLKECDPHSNDYVSRLKDEVNVVKTIELVLQYFERSGTNNERCRIYLRKIEHLYYKFDPEVLKKKRGELPATTSTSVDVMDKLCKFIYAKDDTDRIRTRAILAHIYHHAMHDNWFQARDLVLMSHLQDNIDAADPATRILYNRMMANLGLCAFRQGNVKDAHHCLVDLMVTGKPKELLAQGLLPQRQHERSAEQEKIEKQRQMPFHMHINLELLECVYLVSAMLLEIPYIAAHEFDARRRMISKTFYQQLRSSERQSLVGPPESMREHVVAAAKAMRCGNWQACANFIVNKKMNTKVWDLFYESDRVREMLTKFIKEESLRTYLFTYSNVYTSISIPSLAQMYELPVPKVHSIISKMIINEELMASLDDPSETVGMHRSEPSRLQALAMQFVDKVTNLVDVNEKVFDMKQGNFFQRGNMGNRGDRGYNRNQNNQGGNWLGQRRDRNNRNRNQRGHHKNNQDRQQQQQQQVQTIDEE.

The tract at residues 1–21 (MSRFFANGSESESESSEEEIQ) is disordered. Residues 11 to 20 (SESESSEEEI) are compositionally biased toward acidic residues. Phosphoserine is present on residues S34, S165, S176, and S185. Residues 157 to 281 (FREAPDQESE…KRAEDDEDGE (125 aa)) are disordered. Residues 162-186 (DQESEAEDEVVALESDGGDAGDDSD) are compositionally biased toward acidic residues. Low complexity predominate over residues 193–207 (EAAPKAVKSAPAKAA). Residues 209–235 (ADDDDSDDSIDWDSDSESETESSDDEN) show a composition bias toward acidic residues. Residues 240 to 268 (MRERFLKRTTEKEEKDDDKRKDKRKEQKT) are compositionally biased toward basic and acidic residues. In terms of domain architecture, PCI spans 639–815 (FHMHINLELL…ETVGMHRSEP (177 aa)). Residues 847–910 (FFQRGNMGNR…QQQVQTIDEE (64 aa)) are disordered. Low complexity predominate over residues 862–874 (NRNQNNQGGNWLG). The segment covering 882–891 (RNRNQRGHHK) has biased composition (basic residues). Residues 895 to 910 (DRQQQQQQQVQTIDEE) show a composition bias toward low complexity.

Belongs to the eIF-3 subunit C family. As to quaternary structure, component of the eukaryotic translation initiation factor 3 (eIF-3) complex. The eIF-3 complex interacts with pix.

The protein localises to the cytoplasm. Functionally, component of the eukaryotic translation initiation factor 3 (eIF-3) complex, which is involved in protein synthesis of a specialized repertoire of mRNAs and, together with other initiation factors, stimulates binding of mRNA and methionyl-tRNAi to the 40S ribosome. The eIF-3 complex specifically targets and initiates translation of a subset of mRNAs involved in cell proliferation. The polypeptide is Eukaryotic translation initiation factor 3 subunit C (Drosophila sechellia (Fruit fly)).